Consider the following 400-residue polypeptide: GTPase-binding protein rid1 (400 aa).

Polar residues predominate over residues 16-27 (LSSDGLSESVNS). The interval 16 to 47 (LSSDGLSESVNSSDREDSLSFQTPSTPSEDEM) is disordered. The 362-residue stretch at 39-400 (PSTPSEDEMP…PYKLVQTGST (362 aa)) folds into the GBD/FH3 domain.

Its subcellular location is the cytoplasm. The polypeptide is GTPase-binding protein rid1 (rid1) (Schizosaccharomyces pombe (strain 972 / ATCC 24843) (Fission yeast)).